A 315-amino-acid chain; its full sequence is Protein OPG185 (315 aa).

Residues 1–16 (MARLPILLLLISLVYS) form the signal peptide. Residues 17 to 121 (TPSPQTSKKI…NDTDKVDYEE (105 aa)) form the Ig-like V-type domain. At 17-279 (TPSPQTSKKI…SNYKTKDFVE (263 aa)) the chain is on the virion surface side. Cysteine 34 and cysteine 103 are oxidised to a cystine. 4 N-linked (GlcNAc...) asparagine; by host glycosylation sites follow: asparagine 37, asparagine 69, asparagine 112, and asparagine 161. Polar residues predominate over residues 192-202 (INTVSASSGES). A disordered region spans residues 192 to 214 (INTVSASSGESTTDETPEPITDK). Asparagine 254 carries an N-linked (GlcNAc...) asparagine; by host glycan. Residues 280–303 (IFGITALIILSAVAIFCITYYIYN) form a helical membrane-spanning segment. The Intravirion segment spans residues 304 to 315 (KRSRKYKTENKV).

The protein belongs to the orthopoxvirus OPG185 family. In terms of assembly, heterodimerizes with OPG040. The heterodimer OPG185-OPG040 interacts with components of the entry fusion complex OPG143 and OPG094. Heterodimer with C3/VPC protein; disulfide-linked. Glycosylated; contains phosphate and sulfate-substituted glycans. O-glycosylation is required for hemagglutination and hemadsorption activities of infected cell membranes.

It localises to the virion membrane. The protein resides in the host membrane. Prevents cell to cell fusion by interacting with and directing the viral OPG040 protein on the host plasma membrane. The OPG185-OPG040 complex associates with components of the entry fusion complex (EFC) presumably to avoid superinfection and syncytium formation. Via its interaction with C3/VCP protein, protects the infected cell and probably also the extracellular enveloped virus from complement attack. This chain is Protein OPG185 (OPG185), found in Vaccinia virus (strain Tian Tan) (VACV).